Here is a 173-residue protein sequence, read N- to C-terminus: RNA pyrophosphohydrolase (173 aa).

The Nudix hydrolase domain maps to 6-149; that stretch reads GFRANVGIIL…KRGVYRRALQ (144 aa). Positions 38–59 match the Nudix box motif; it reads GGIDRGETPMDAMYRELWEEVG.

Belongs to the Nudix hydrolase family. RppH subfamily. A divalent metal cation is required as a cofactor.

In terms of biological role, accelerates the degradation of transcripts by removing pyrophosphate from the 5'-end of triphosphorylated RNA, leading to a more labile monophosphorylated state that can stimulate subsequent ribonuclease cleavage. In Psychrobacter arcticus (strain DSM 17307 / VKM B-2377 / 273-4), this protein is RNA pyrophosphohydrolase.